We begin with the raw amino-acid sequence, 333 residues long: DNA-directed RNA polymerase subunit alpha (333 aa).

Residues 1–239 (MSAVLDKGSL…TQARCFLNIA (239 aa)) are alpha N-terminal domain (alpha-NTD). The segment at 259-333 (DASDLLSARI…SLGMNLDSHG (75 aa)) is alpha C-terminal domain (alpha-CTD).

The protein belongs to the RNA polymerase alpha chain family. As to quaternary structure, homodimer. The RNAP catalytic core consists of 2 alpha, 1 beta, 1 beta' and 1 omega subunit. When a sigma factor is associated with the core the holoenzyme is formed, which can initiate transcription.

The catalysed reaction is RNA(n) + a ribonucleoside 5'-triphosphate = RNA(n+1) + diphosphate. DNA-dependent RNA polymerase catalyzes the transcription of DNA into RNA using the four ribonucleoside triphosphates as substrates. The chain is DNA-directed RNA polymerase subunit alpha from Neorickettsia sennetsu (strain ATCC VR-367 / Miyayama) (Ehrlichia sennetsu).